Reading from the N-terminus, the 132-residue chain is Nucleoid-associated protein EspR (132 aa).

The H-T-H motif DNA-binding region spans 38 to 50 (ITMSAPYLSQLRS).

In terms of assembly, homodimer. Binds DNA as a dimer of dimers.

The protein resides in the cytoplasm. The protein localises to the nucleoid. Functionally, virulence regulator that has both architectural and regulatory roles. Impacts cell wall functions and pathogenesis through regulation of multiple genes. This chain is Nucleoid-associated protein EspR, found in Mycobacterium tuberculosis (strain CDC 1551 / Oshkosh).